The primary structure comprises 220 residues: LHFPL tetraspan subfamily member 1 protein (220 aa).

Residues 1-20 (MRNSLTMVGTFWAFLSLVTA) form the signal peptide. A run of 2 helical transmembrane segments spans residues 86–106 (VVTGAGCALLLLVALAAVLGC) and 122–142 (AAQFVGGLLISAGCALYPLGW). Residue Asn-153 is glycosylated (N-linked (GlcNAc...) asparagine). Residues 165-185 (LGWAYYCAGGGAAAAMLICTW) form a helical membrane-spanning segment.

The protein belongs to the LHFP family. Widely expressed. Strongly expressed in vagina and ovary. Weakly expressed in spleen, kidney, thymus, testis, brain, lung, intestine and uterus.

Its subcellular location is the membrane. The chain is LHFPL tetraspan subfamily member 1 protein from Mus musculus (Mouse).